The sequence spans 261 residues: tRNA pseudouridine synthase A 2 (261 aa).

Residue aspartate 59 is the Nucleophile of the active site. Tyrosine 117 is a substrate binding site.

This sequence belongs to the tRNA pseudouridine synthase TruA family. Homodimer.

It catalyses the reaction uridine(38/39/40) in tRNA = pseudouridine(38/39/40) in tRNA. Functionally, formation of pseudouridine at positions 38, 39 and 40 in the anticodon stem and loop of transfer RNAs. In Desulfotalea psychrophila (strain LSv54 / DSM 12343), this protein is tRNA pseudouridine synthase A 2.